A 171-amino-acid chain; its full sequence is MLTVEVYEMSKKIDIKFKLTIQEKIEIFNIIKNYRTVRSSLIEILKFVQKSYGWISNELITELACILKISKCDIEEIATFYSQIFRQPIGRNIIKYCDSVVCYVNGCEKIRCSLEKNLNVNVGETTKDFKFTLLPICCLGNCDKSPTIMINDDLYSNVTEYSVIVLLESYQ.

[2Fe-2S] cluster-binding residues include C97, C102, C138, and C142.

This sequence belongs to the complex I 24 kDa subunit family. In terms of assembly, composed of 13 different subunits. Subunits NuoCD, E, F, and G constitute the peripheral sector of the complex. The cofactor is [2Fe-2S] cluster.

It catalyses the reaction a quinone + NADH + 5 H(+)(in) = a quinol + NAD(+) + 4 H(+)(out). In terms of biological role, NDH-1 shuttles electrons from NADH, via FMN and iron-sulfur (Fe-S) centers, to quinones in the respiratory chain. Couples the redox reaction to proton translocation (for every two electrons transferred, four hydrogen ions are translocated across the cytoplasmic membrane), and thus conserves the redox energy in a proton gradient. The sequence is that of NADH-quinone oxidoreductase subunit E (nuoE) from Buchnera aphidicola subsp. Baizongia pistaciae (strain Bp).